A 486-amino-acid chain; its full sequence is Cardiolipin synthase A (486 aa).

2 consecutive transmembrane segments (helical) span residues 3 to 23 and 38 to 58; these read TVYT…IAGV and MAWL…YLAV. 2 consecutive PLD phosphodiesterase domains span residues 219-246 and 399-426; these read MDLR…VDPR and EGGL…DMRS. Active-site residues include His224, Lys226, Asp231, His404, Lys406, and Asp411.

Belongs to the phospholipase D family. Cardiolipin synthase subfamily. ClsA sub-subfamily.

The protein resides in the cell inner membrane. The enzyme catalyses 2 a 1,2-diacyl-sn-glycero-3-phospho-(1'-sn-glycerol) = a cardiolipin + glycerol. Its function is as follows. Catalyzes the reversible phosphatidyl group transfer from one phosphatidylglycerol molecule to another to form cardiolipin (CL) (diphosphatidylglycerol) and glycerol. The protein is Cardiolipin synthase A of Shigella dysenteriae serotype 1 (strain Sd197).